Here is a 544-residue protein sequence, read N- to C-terminus: Chaperonin GroEL (544 aa).

ATP-binding positions include 30 to 33 (TLGP), Lys-51, 87 to 91 (DGTTT), Gly-415, and Asp-495.

The protein belongs to the chaperonin (HSP60) family. In terms of assembly, forms a cylinder of 14 subunits composed of two heptameric rings stacked back-to-back. Interacts with the co-chaperonin GroES.

It localises to the cytoplasm. The enzyme catalyses ATP + H2O + a folded polypeptide = ADP + phosphate + an unfolded polypeptide.. Its function is as follows. Together with its co-chaperonin GroES, plays an essential role in assisting protein folding. The GroEL-GroES system forms a nano-cage that allows encapsulation of the non-native substrate proteins and provides a physical environment optimized to promote and accelerate protein folding. This is Chaperonin GroEL from Neisseria meningitidis serogroup A / serotype 4A (strain DSM 15465 / Z2491).